We begin with the raw amino-acid sequence, 956 residues long: Plasma membrane ATPase 1 (956 aa).

At M1–F65 the chain is on the cytoplasmic side. The chain crosses the membrane as a helical span at residues L66 to I85. Residues A86–W97 are Extracellular-facing. Residues Q98–E118 form a helical membrane-spanning segment. The Cytoplasmic portion of the chain corresponds to N119–I247. The chain crosses the membrane as a helical span at residues G248–P268. Residues I269–G277 lie on the Extracellular side of the membrane. Residues I278 to T295 traverse the membrane as a helical segment. The Cytoplasmic segment spans residues V296–M646. Residue D333 is the 4-aspartylphosphate intermediate of the active site. Mg(2+) contacts are provided by D592 and D596. Residues K647–L666 form a helical membrane-spanning segment. Residues L667–D674 lie on the Extracellular side of the membrane. A helical membrane pass occupies residues F675–D697. Topologically, residues R698 to I713 are cytoplasmic. Residues F714 to A734 form a helical membrane-spanning segment. The Extracellular segment spans residues A735–R759. Residues K760 to T780 traverse the membrane as a helical segment. Residues R781–G792 are Cytoplasmic-facing. A helical membrane pass occupies residues L793 to A813. Topologically, residues N814–E821 are extracellular. Residues G822–L842 form a helical membrane-spanning segment. Over D843–V956 the chain is Cytoplasmic.

This sequence belongs to the cation transport ATPase (P-type) (TC 3.A.3) family. Type IIIA subfamily. As to quaternary structure, possibly exists as a homodimer or a homotrimer.

The protein resides in the cell membrane. It catalyses the reaction ATP + H2O + H(+)(in) = ADP + phosphate + 2 H(+)(out). In terms of biological role, the plasma membrane ATPase of plants and fungi is a hydrogen ion pump. The proton gradient it generates drives the active transport of nutrients by H(+)-symport. The resulting external acidification and/or internal alkinization may mediate growth responses. This Solanum lycopersicum (Tomato) protein is Plasma membrane ATPase 1 (LHA1).